A 109-amino-acid polypeptide reads, in one-letter code: uncharacterized protein (109 aa).

A helical transmembrane segment spans residues 90–107; the sequence is IICNFWGSLLGVGIAFYQ.

It is found in the membrane. This is an uncharacterized protein from Saccharomyces cerevisiae (strain ATCC 204508 / S288c) (Baker's yeast).